The following is a 191-amino-acid chain: MKKNLLGFTLASLLFTTGSAVAAEYKIDKEGQHAFVNFRIQHLGYSWLYGTFKDFDGTFTFDEKNPSADKVNVTINTNSVDTNHAERDKHLRSAEFLNVAKFPQATFTSTSVKKEGDELDITGNLTLNGVTKPVTLEAKLMGQGDDPWGGKRAGFEAEGKIKLKDFNITTDLGPASQEVELIISVEGVQQK.

The signal sequence occupies residues 1–22 (MKKNLLGFTLASLLFTTGSAVA).

It belongs to the UPF0312 family. Type 1 subfamily.

It localises to the periplasm. This Salmonella dublin (strain CT_02021853) protein is Protein YceI.